Here is a 256-residue protein sequence, read N- to C-terminus: GCN5-related N-acetyltransferase 10, chloroplastic (256 aa).

A chloroplast-targeting transit peptide spans 1–41 (MGHLPQSLYSAAGPKFPYPGSSGLGVDQRKLTWSRFPVFLR). Residues 106–256 (FMFFQAEVLS…RRVLMSKRFS (151 aa)) form the N-acetyltransferase domain. Residues 178–180 (LAV), 186–191 (RKKMAS), 217–219 (DAA), and tyrosine 224 contribute to the acetyl-CoA site. Tyrosine 224 functions as the Proton donor in the catalytic mechanism.

This sequence belongs to the acetyltransferase family. GNAT subfamily. In terms of assembly, oligomer. Autoacetylated. Expressed in green tissues.

It localises to the plastid. It is found in the chloroplast. The enzyme catalyses an N-terminal L-alpha-aminoacyl-[protein] + acetyl-CoA = N-terminal N(alpha)-acetyl-L-alpha-aminoacyl-[protein] + CoA + H(+). It carries out the reaction L-lysyl-[protein] + acetyl-CoA = N(6)-acetyl-L-lysyl-[protein] + CoA + H(+). It catalyses the reaction N-terminal L-methionyl-[protein] + acetyl-CoA = N-terminal N(alpha)-acetyl-L-methionyl-[protein] + CoA + H(+). The catalysed reaction is N-terminal L-seryl-[protein] + acetyl-CoA = N-terminal N(alpha)-acetyl-L-seryl-[protein] + CoA + H(+). The enzyme catalyses N-terminal L-valyl-[protein] + acetyl-CoA = N-terminal N(alpha)-acetyl-L-valyl-[protein] + CoA + H(+). It carries out the reaction N-terminal L-threonyl-[protein] + acetyl-CoA = N-terminal N(alpha)-acetyl-L-threonyl-[protein] + CoA + H(+). It catalyses the reaction N-terminal L-alanyl-[protein] + acetyl-CoA = N-terminal N(alpha)-acetyl-L-alanyl-[protein] + CoA + H(+). The catalysed reaction is N-terminal glycyl-[protein] + acetyl-CoA = N-terminal N(alpha)-acetylglycyl-[protein] + CoA + H(+). Functionally, protein acetyltransferase with dual specificity triggering both N-alpha-acetylation (NTA), with a preference for leucine, methionine, serine, valine and to a lower extent threonine and alanine as substrates (can also use glycine), and epsilon-lysine acetylation (KA) of several plastid proteins. This is GCN5-related N-acetyltransferase 10, chloroplastic from Arabidopsis thaliana (Mouse-ear cress).